A 382-amino-acid chain; its full sequence is MASDINRRRSFSLLVLIIVMLYGHKGDSKCDFEAIFNFGDSNSDTGGFWAAFPAQSGPWGMTYFKKPAGRASDGRLIIDFLAKSLGMPFLSPYLQSIGSDFRHGANFATLASTVLLPNTSLFVSGISPFSLAIQLNQMKQFKVNVDESHSLDRPGLKILPSKIVFGKSLYTFYIGQNDFTSNLASIGVERVKLYLPQVIGQIAGTIKEIYGIGGRTFLVLNLAPVGCYPAILTGYTHTDADLDKYGCLIPVNKAVKYYNTLLNKTLSQTRTELKNATVIYLDTHKILLDLFQHPKSYGMKHGIKACCGYGGRPYNFNQKLFCGNTKVIGNFSTTAKACHDPHNYVSWDGIHATEAANHHISMAILDGSISYPPFILNNLCSP.

A signal peptide spans 1-28 (MASDINRRRSFSLLVLIIVMLYGHKGDS). Serine 41 functions as the Nucleophile in the catalytic mechanism. 4 N-linked (GlcNAc...) asparagine glycosylation sites follow: asparagine 118, asparagine 263, asparagine 275, and asparagine 330. Catalysis depends on residues aspartate 348 and histidine 351.

This sequence belongs to the 'GDSL' lipolytic enzyme family.

The protein localises to the secreted. The protein is GDSL esterase/lipase At4g01130 of Arabidopsis thaliana (Mouse-ear cress).